Here is a 243-residue protein sequence, read N- to C-terminus: Transcription factor TFIIS homolog (243 aa).

The 125-residue stretch at 77–201 (MRDIIQMMFF…SQQKVAEKTS (125 aa)) folds into the TFIIS central domain. The segment at 202-242 (QLYKCPNCKQRMCTYREVQTRALDEPSTIFCTCKKCGHEFI) adopts a TFIIS-type zinc-finger fold. Residues Cys206, Cys209, Cys234, and Cys237 each contribute to the Zn(2+) site.

This sequence belongs to the TFS-II family.

In terms of biological role, putative initiation factor. Necessary for efficient transcription elongation past template-encoded arresting sites. The sequence is that of Transcription factor TFIIS homolog from Ornithodoros (relapsing fever ticks).